The sequence spans 974 residues: Isoleucine--tRNA ligase (974 aa).

Positions 69-79 match the 'HIGH' region motif; sequence PYANGALHMGH. L-isoleucyl-5'-AMP is bound at residue Glu585. A 'KMSKS' region motif is present at residues 626–630; the sequence is KMSKS. Residue Lys629 coordinates ATP. Cys939, Cys942, Cys959, and Cys962 together coordinate Zn(2+).

Belongs to the class-I aminoacyl-tRNA synthetase family. IleS type 1 subfamily. In terms of assembly, monomer. It depends on Zn(2+) as a cofactor.

The protein resides in the cytoplasm. The enzyme catalyses tRNA(Ile) + L-isoleucine + ATP = L-isoleucyl-tRNA(Ile) + AMP + diphosphate. Functionally, catalyzes the attachment of isoleucine to tRNA(Ile). As IleRS can inadvertently accommodate and process structurally similar amino acids such as valine, to avoid such errors it has two additional distinct tRNA(Ile)-dependent editing activities. One activity is designated as 'pretransfer' editing and involves the hydrolysis of activated Val-AMP. The other activity is designated 'posttransfer' editing and involves deacylation of mischarged Val-tRNA(Ile). This Parasynechococcus marenigrum (strain WH8102) protein is Isoleucine--tRNA ligase.